The primary structure comprises 174 residues: Mating-type protein ALPHA2 (174 aa).

Residues 108 to 170 constitute a DNA-binding region (homeobox; TALE-type); that stretch reads QPYRGHRFTK…NRRRKQKHPP (63 aa).

The protein belongs to the TALE/M-ATYP homeobox family. As to quaternary structure, forms a heterodimer with A1.

It is found in the nucleus. Its function is as follows. Mating type proteins are sequence specific DNA-binding proteins that act as master switches in yeast differentiation by controlling gene expression in a cell type-specific fashion. Transcriptional corepressor that acts in conjunction with A1 to repress transcription of haploid-specific genes and of MATALPHA1. The polypeptide is Mating-type protein ALPHA2 (MATALPHA2) (Nakaseomyces delphensis (Yeast)).